A 465-amino-acid chain; its full sequence is Dihydrolipoyl dehydrogenase (465 aa).

Residues 34–42 (EEREAGGTC), lysine 51, and glycine 114 contribute to the FAD site. A disulfide bond links cysteine 42 and cysteine 47. Residues 180-184 (GGGVI), glutamate 203, valine 237, and 264-267 (SIGR) each bind NAD(+). Positions 307 and 315 each coordinate FAD. Residue histidine 439 is the Proton acceptor of the active site.

The protein belongs to the class-I pyridine nucleotide-disulfide oxidoreductase family. FAD serves as cofactor.

It localises to the cytoplasm. The catalysed reaction is N(6)-[(R)-dihydrolipoyl]-L-lysyl-[protein] + NAD(+) = N(6)-[(R)-lipoyl]-L-lysyl-[protein] + NADH + H(+). The branched-chain alpha-keto dehydrogenase complex catalyzes the overall conversion of alpha-keto acids to acyl-CoA and CO(2). It contains multiple copies of 3 enzymatic components: branched-chain alpha-keto acid decarboxylase (E1), lipoamide acyltransferase (E2) and lipoamide dehydrogenase (E3). The polypeptide is Dihydrolipoyl dehydrogenase (lpdA) (Chlamydia muridarum (strain MoPn / Nigg)).